Reading from the N-terminus, the 258-residue chain is Dihydroorotate dehydrogenase B (NAD(+)), electron transfer subunit (258 aa).

The 101-residue stretch at 1–101 (MKKAYLTVVS…LGPLGNGYDP (101 aa)) folds into the FAD-binding FR-type domain. Residues 52–55 (RPIS), 69–71 (IYR), and 76–77 (GT) contribute to the FAD site. [2Fe-2S] cluster-binding residues include Cys-220, Cys-225, Cys-228, and Cys-243.

The protein belongs to the PyrK family. As to quaternary structure, heterotetramer of 2 PyrK and 2 PyrD type B subunits. The cofactor is [2Fe-2S] cluster. FAD serves as cofactor.

It functions in the pathway pyrimidine metabolism; UMP biosynthesis via de novo pathway; orotate from (S)-dihydroorotate (NAD(+) route): step 1/1. Functionally, responsible for channeling the electrons from the oxidation of dihydroorotate from the FMN redox center in the PyrD type B subunit to the ultimate electron acceptor NAD(+). This chain is Dihydroorotate dehydrogenase B (NAD(+)), electron transfer subunit, found in Bacillus pumilus (strain SAFR-032).